The chain runs to 548 residues: Solute carrier family 22 member 7 (548 aa).

The chain crosses the membrane as a helical span at residues 21-41; sequence VALLALPRVLLPLHFLLPIFL. The N-linked (GlcNAc...) asparagine glycan is linked to Asn-91. 11 helical membrane passes run 146–166, 180–200, 204–224, 234–254, 259–279, 346–366, 376–397, 404–423, 432–452, 466–486, and 493–513; these read AASTFFFAGVLVGAVAFGYLS, VSTLVLGLASAASVSYVMFAI, LTGSALAGFTIIVMPLELEWL, VLSSTFWTGGVMLLALVGYLI, WLLLAVTLPCAPGILSLWWVP, ISLCCVVVWFGVNFSYYGLSL, YQTQLLFGAVELPSKLLVYLSV, LTQAGTLLGTALAFGTRLLV, TVLAVMGKAFSEAAFTTAYLF, MGLTALVGRLGGSLAPLAALL, and LPKLTYGGIALLAAGTALLLP. Phe-441 functions as the Important for glutamate counteranion efflux in the catalytic mechanism. The disordered stretch occupies residues 522-548; sequence ETIQDVERKSAPTSLQEEEMPMKQVQN.

It belongs to the major facilitator (TC 2.A.1) superfamily. Organic cation transporter (TC 2.A.1.19) family. Mainly expressed in liver and kidney. In kidney, expressed in proximal tubular cells. Also expressed in pancreas, small intestine, spinal cord, lung, brain and heart. Expressed in fetal liver.

It is found in the basolateral cell membrane. The protein resides in the apical cell membrane. Its subcellular location is the cell membrane. It localises to the cytoplasm. The protein localises to the cytosol. It carries out the reaction orotate(out) + L-glutamate(in) = orotate(in) + L-glutamate(out). The catalysed reaction is 3',5'-cyclic GMP(in) = 3',5'-cyclic GMP(out). It catalyses the reaction GMP(in) = GMP(out). The enzyme catalyses 2'-deoxyguanosine(in) = 2'-deoxyguanosine(out). It carries out the reaction GDP(in) = GDP(out). The catalysed reaction is guanosine(in) = guanosine(out). It catalyses the reaction GTP(in) = GTP(out). The enzyme catalyses 3',5'-cyclic AMP(in) = 3',5'-cyclic AMP(out). It carries out the reaction creatinine(in) = creatinine(out). The catalysed reaction is prostaglandin E2(out) = prostaglandin E2(in). It catalyses the reaction 2-oxoglutarate(in) = 2-oxoglutarate(out). The enzyme catalyses glutarate(in) = glutarate(out). It carries out the reaction urate(out) = urate(in). The catalysed reaction is estrone 3-sulfate(out) = estrone 3-sulfate(in). It catalyses the reaction prostaglandin F2alpha(out) = prostaglandin F2alpha(in). Functions as a Na(+)-independent bidirectional multispecific transporter. Contributes to the renal and hepatic elimination of endogenous organic compounds from the systemic circulation into the urine and bile, respectively. Capable of transporting a wide range of purine and pyrimidine nucleobases, nucleosides and nucleotides, with cGMP, 2'deoxyguanosine and GMP being the preferred substrates. Functions as a pH- and chloride-independent cGMP bidirectional facilitative transporter that can regulate both intracellular and extracellular levels of cGMP and may be involved in cGMP signaling pathways. Mediates orotate/glutamate bidirectional exchange and most likely display a physiological role in hepatic release of glutamate into the blood. Involved in renal secretion and possible reabsorption of creatinine. Able to uptake prostaglandin E2 (PGE2) and may contribute to PGE2 renal excretion. Also transports alpha-ketoglutarate and urate. Apart from the orotate/glutamate exchange, the counterions for the uptake of other SLC22A7/OAT2 substrates remain to be identified. In terms of biological role, non functional transporter. Its function is as follows. Involved in the uptake of prostaglandin F2-alpha (PGF2-alpha). This chain is Solute carrier family 22 member 7, found in Homo sapiens (Human).